Here is a 205-residue protein sequence, read N- to C-terminus: Probable nicotinate-nucleotide adenylyltransferase (205 aa).

This sequence belongs to the NadD family.

It catalyses the reaction nicotinate beta-D-ribonucleotide + ATP + H(+) = deamido-NAD(+) + diphosphate. Its pathway is cofactor biosynthesis; NAD(+) biosynthesis; deamido-NAD(+) from nicotinate D-ribonucleotide: step 1/1. Functionally, catalyzes the reversible adenylation of nicotinate mononucleotide (NaMN) to nicotinic acid adenine dinucleotide (NaAD). The polypeptide is Probable nicotinate-nucleotide adenylyltransferase (Arthrobacter sp. (strain FB24)).